The sequence spans 679 residues: DNA ligase (679 aa).

Residues 32–36 (DTLYD), 81–82 (SL), and E115 contribute to the NAD(+) site. The active-site N6-AMP-lysine intermediate is K117. Residues R138, E175, K293, and K317 each contribute to the NAD(+) site. Zn(2+) is bound by residues C411, C414, C429, and C434. One can recognise a BRCT domain in the interval 601-679 (NSSGALLGKT…EAELQKLLST (79 aa)).

The protein belongs to the NAD-dependent DNA ligase family. LigA subfamily. Mg(2+) is required as a cofactor. Mn(2+) serves as cofactor.

It carries out the reaction NAD(+) + (deoxyribonucleotide)n-3'-hydroxyl + 5'-phospho-(deoxyribonucleotide)m = (deoxyribonucleotide)n+m + AMP + beta-nicotinamide D-nucleotide.. Functionally, DNA ligase that catalyzes the formation of phosphodiester linkages between 5'-phosphoryl and 3'-hydroxyl groups in double-stranded DNA using NAD as a coenzyme and as the energy source for the reaction. It is essential for DNA replication and repair of damaged DNA. The protein is DNA ligase of Parasynechococcus marenigrum (strain WH8102).